The following is a 649-amino-acid chain: Transcription factor tau 95 kDa subunit (649 aa).

A disordered region spans residues 1–21; the sequence is MPVEEPLATLSSIPDSSADQA. Residues 9 to 19 are compositionally biased toward polar residues; the sequence is TLSSIPDSSAD. Repeat 1 spans residues 221-239; that stretch reads PSTDFQLPPPPKLSMVGFP. The 2 X repeats, Pro-rich stretch occupies residues 221–419; it reads PSTDFQLPPP…PPLVFESDTP (199 aa). Residues 296–300 carry the Nuclear localization signal motif; that stretch reads AKKTK. The stretch at 400–419 is repeat 2; it reads PIVKKNVPKPPPLVFESDTP. Positions 556-612 are disordered; sequence IAAGDDFDDNGAITEEPDDAALENEEMDTDQNLKVPASIDDDVDDVDADEEEQESFD. Composition is skewed to acidic residues over residues 560 to 584 and 594 to 610; these read DDFD…EMDT and IDDD…EQES. Ser617 is subject to Phosphoserine.

Belongs to the TFIIIC subunit 5 family. Component of the TFIIIC complex composed of TFC1, TFC3, TFC4, TFC6, TFC7 and TFC8. The subunits are organized in two globular domains, tauA and tauB, connected by a proteolysis-sensitive and flexible linker. Interacts with TFC3, TFC4 and TFC6.

It localises to the nucleus. Its function is as follows. TFIIIC mediates tRNA and 5S RNA gene activation by binding to intragenic promoter elements. Upstream of the transcription start site, TFIIIC assembles the initiation complex TFIIIB-TFIIIC-tDNA, which is sufficient for RNA polymerase III recruitment and function. Part of the tauA domain of TFIIIC that binds boxA DNA promoter sites of tRNA and similar genes. Participates in the interconnection of tauA with tauB via its contacts with TFC3 and TFC6. Serves as a scaffold critical for tauA-DNA spatial configuration and tauB-DNA stability. The chain is Transcription factor tau 95 kDa subunit (TFC1) from Saccharomyces cerevisiae (strain ATCC 204508 / S288c) (Baker's yeast).